A 519-amino-acid polypeptide reads, in one-letter code: 3-octaprenyl-4-hydroxybenzoate carboxy-lyase (519 aa).

Asparagine 177 contacts Mn(2+). Prenylated FMN is bound by residues 180 to 182 (IYR), 194 to 196 (RWL), and 199 to 200 (RG). Residue glutamate 243 participates in Mn(2+) binding. The active-site Proton donor is the aspartate 318.

It belongs to the UbiD family. In terms of assembly, homohexamer. Requires prenylated FMN as cofactor. It depends on Mn(2+) as a cofactor.

The protein localises to the cell membrane. The enzyme catalyses a 4-hydroxy-3-(all-trans-polyprenyl)benzoate + H(+) = a 2-(all-trans-polyprenyl)phenol + CO2. The protein operates within cofactor biosynthesis; ubiquinone biosynthesis. Its function is as follows. Catalyzes the decarboxylation of 3-octaprenyl-4-hydroxy benzoate to 2-octaprenylphenol, an intermediate step in ubiquinone biosynthesis. The protein is 3-octaprenyl-4-hydroxybenzoate carboxy-lyase of Burkholderia mallei (strain ATCC 23344).